The sequence spans 115 residues: MLMHSILIILVIILTTYFTRIWPFMVFNAKNPPNDFVRYLGRALSCSVIGMLVIYCFKDIHILKPPYGINEITAFLSVILLHRIFKVFVLSITLPTILYMVLVQSHALEKAFFNP.

Helical transmembrane passes span 6–26, 43–63, and 84–104; these read ILII…PFMV, ALSC…IHIL, and IFKV…VLVQ.

The protein belongs to the AzlD/HI_1737/HP1330 family.

Its subcellular location is the cell membrane. This is an uncharacterized protein from Helicobacter pylori (strain ATCC 700392 / 26695) (Campylobacter pylori).